Reading from the N-terminus, the 561-residue chain is Arginine--tRNA ligase (561 aa).

The 'HIGH' region signature appears at 129–139 (ANPTGPLHVGH).

The protein belongs to the class-I aminoacyl-tRNA synthetase family. Monomer.

It localises to the cytoplasm. It carries out the reaction tRNA(Arg) + L-arginine + ATP = L-arginyl-tRNA(Arg) + AMP + diphosphate. The chain is Arginine--tRNA ligase from Bordetella petrii (strain ATCC BAA-461 / DSM 12804 / CCUG 43448).